The chain runs to 399 residues: METWALILAAGQGSRLLSTIGIAKQFFVWKGIPLYWQSVLQFMHCARIRGVVLVFPSEVKDNEEKVVDRLAAQYDLRLPYIVISGGKLRQDSVKNALNTLPKNCSHVLIHDAARPFISPKLINNVIEVLEAGAVGVVPGISVTDTIKQVIQGEVIVTRPREQLIAVQTPQGFHLKTIVEGHNRATLEKWTVTDDASLLELCGHTVQVINGEIENRKISFPQDLLYMVEQPKTTVPIVGYGYDVHKYVTEDQINQPIRSMRLGGISIPNAPNVVAHSDGDVLLHALMDALLGCIGGGDIGLHFPDSDKRYDGINSAILLDHVLTKVLESSIKIVHMDATIVAQLPKISQYREAIRSNLSRLLDLDLANVNIKATTEEGLGFTGECKGIKAIVIVTAIRIS.

Residues 1 to 235 (METWALILAA…MVEQPKTTVP (235 aa)) are 2-C-methyl-D-erythritol 4-phosphate cytidylyltransferase. The interval 236 to 399 (IVGYGYDVHK…IVIVTAIRIS (164 aa)) is 2-C-methyl-D-erythritol 2,4-cyclodiphosphate synthase. A divalent metal cation-binding residues include D242 and H244. Residues 242-244 (DVH) and 275-276 (HS) each bind 4-CDP-2-C-methyl-D-erythritol 2-phosphate. H283 lines the a divalent metal cation pocket. 4-CDP-2-C-methyl-D-erythritol 2-phosphate is bound by residues 297 to 299 (DIG), 302 to 306 (FPDSD), 373 to 376 (TTEE), and F380.

In the N-terminal section; belongs to the IspD/TarI cytidylyltransferase family. IspD subfamily. It in the C-terminal section; belongs to the IspF family. A divalent metal cation is required as a cofactor.

It carries out the reaction 2-C-methyl-D-erythritol 4-phosphate + CTP + H(+) = 4-CDP-2-C-methyl-D-erythritol + diphosphate. It catalyses the reaction 4-CDP-2-C-methyl-D-erythritol 2-phosphate = 2-C-methyl-D-erythritol 2,4-cyclic diphosphate + CMP. It functions in the pathway isoprenoid biosynthesis; isopentenyl diphosphate biosynthesis via DXP pathway; isopentenyl diphosphate from 1-deoxy-D-xylulose 5-phosphate: step 2/6. The protein operates within isoprenoid biosynthesis; isopentenyl diphosphate biosynthesis via DXP pathway; isopentenyl diphosphate from 1-deoxy-D-xylulose 5-phosphate: step 4/6. Bifunctional enzyme that catalyzes the formation of 4-diphosphocytidyl-2-C-methyl-D-erythritol from CTP and 2-C-methyl-D-erythritol 4-phosphate (MEP) (IspD), and catalyzes the conversion of 4-diphosphocytidyl-2-C-methyl-D-erythritol 2-phosphate (CDP-ME2P) to 2-C-methyl-D-erythritol 2,4-cyclodiphosphate (ME-CPP) with a corresponding release of cytidine 5-monophosphate (CMP) (IspF). In Lawsonia intracellularis (strain PHE/MN1-00), this protein is Bifunctional enzyme IspD/IspF.